The sequence spans 509 residues: Photosystem II CP47 reaction center protein (509 aa).

The next 6 helical transmembrane spans lie at 21–36 (AVHLMHTALVAGWAGS), 101–115 (IVLSGMLFLAAIWHW), 140–156 (GIHLLLSSLLCFGFGAF), 203–218 (IAAGTVGILAGVFHLT), 237–252 (VLSSSISAVFFSAFVT), and 457–472 (NFALIFFFGHLWHGSR).

The protein belongs to the PsbB/PsbC family. PsbB subfamily. PSII is composed of 1 copy each of membrane proteins PsbA, PsbB, PsbC, PsbD, PsbE, PsbF, PsbH, PsbI, PsbJ, PsbK, PsbL, PsbM, PsbT, PsbX, PsbY, PsbZ, Psb30/Ycf12, at least 3 peripheral proteins of the oxygen-evolving complex and a large number of cofactors. It forms dimeric complexes. Binds multiple chlorophylls. PSII binds additional chlorophylls, carotenoids and specific lipids. serves as cofactor.

Its subcellular location is the plastid. It localises to the chloroplast thylakoid membrane. In terms of biological role, one of the components of the core complex of photosystem II (PSII). It binds chlorophyll and helps catalyze the primary light-induced photochemical processes of PSII. PSII is a light-driven water:plastoquinone oxidoreductase, using light energy to abstract electrons from H(2)O, generating O(2) and a proton gradient subsequently used for ATP formation. The protein is Photosystem II CP47 reaction center protein of Pyropia yezoensis (Susabi-nori).